Reading from the N-terminus, the 190-residue chain is NADH-quinone oxidoreductase subunit B (190 aa).

Residues Cys-67, Cys-68, Cys-132, and Cys-162 each coordinate [4Fe-4S] cluster.

It belongs to the complex I 20 kDa subunit family. As to quaternary structure, NDH-1 is composed of 14 different subunits. Subunits NuoB, C, D, E, F, and G constitute the peripheral sector of the complex. Requires [4Fe-4S] cluster as cofactor.

It localises to the cell inner membrane. It catalyses the reaction a quinone + NADH + 5 H(+)(in) = a quinol + NAD(+) + 4 H(+)(out). In terms of biological role, NDH-1 shuttles electrons from NADH, via FMN and iron-sulfur (Fe-S) centers, to quinones in the respiratory chain. The immediate electron acceptor for the enzyme in this species is believed to be ubiquinone. Couples the redox reaction to proton translocation (for every two electrons transferred, four hydrogen ions are translocated across the cytoplasmic membrane), and thus conserves the redox energy in a proton gradient. The chain is NADH-quinone oxidoreductase subunit B from Anaplasma marginale (strain Florida).